Here is a 199-residue protein sequence, read N- to C-terminus: Pyridoxal 5'-phosphate synthase subunit PdxT (199 aa).

49–51 provides a ligand contact to L-glutamine; it reads GES. Catalysis depends on Cys-81, which acts as the Nucleophile. L-glutamine contacts are provided by residues Arg-110 and 139–140; that span reads IR. Catalysis depends on charge relay system residues His-175 and Glu-177.

This sequence belongs to the glutaminase PdxT/SNO family. As to quaternary structure, in the presence of PdxS, forms a dodecamer of heterodimers. Only shows activity in the heterodimer.

The catalysed reaction is aldehydo-D-ribose 5-phosphate + D-glyceraldehyde 3-phosphate + L-glutamine = pyridoxal 5'-phosphate + L-glutamate + phosphate + 3 H2O + H(+). It catalyses the reaction L-glutamine + H2O = L-glutamate + NH4(+). Its pathway is cofactor biosynthesis; pyridoxal 5'-phosphate biosynthesis. Catalyzes the hydrolysis of glutamine to glutamate and ammonia as part of the biosynthesis of pyridoxal 5'-phosphate. The resulting ammonia molecule is channeled to the active site of PdxS. In Frankia alni (strain DSM 45986 / CECT 9034 / ACN14a), this protein is Pyridoxal 5'-phosphate synthase subunit PdxT.